Consider the following 270-residue polypeptide: Shikimate dehydrogenase (NADP(+)) (270 aa).

Residues 14 to 16 and Thr-61 contribute to the shikimate site; that span reads SKS. Catalysis depends on Lys-65, which acts as the Proton acceptor. Shikimate-binding residues include Asn-86 and Asp-101. NADP(+)-binding positions include 126–130, 150–155, and Met-215; these read GAGGA and NRTVDK. Shikimate is bound at residue Tyr-217. NADP(+) is bound at residue Gly-238.

It belongs to the shikimate dehydrogenase family. In terms of assembly, homodimer.

It carries out the reaction shikimate + NADP(+) = 3-dehydroshikimate + NADPH + H(+). It functions in the pathway metabolic intermediate biosynthesis; chorismate biosynthesis; chorismate from D-erythrose 4-phosphate and phosphoenolpyruvate: step 4/7. Involved in the biosynthesis of the chorismate, which leads to the biosynthesis of aromatic amino acids. Catalyzes the reversible NADPH linked reduction of 3-dehydroshikimate (DHSA) to yield shikimate (SA). This chain is Shikimate dehydrogenase (NADP(+)), found in Methylobacillus flagellatus (strain ATCC 51484 / DSM 6875 / VKM B-1610 / KT).